Reading from the N-terminus, the 330-residue chain is Ketol-acid reductoisomerase (NADP(+)) (330 aa).

The 181-residue stretch at 2–182 folds into the KARI N-terminal Rossmann domain; sequence VETFYEKDAD…GCTRAGVIKT (181 aa). NADP(+)-binding positions include 25-28, lysine 48, serine 51, serine 53, and 83-86; these read YGSQ and DEVQ. Residue histidine 108 is part of the active site. Glycine 134 is a binding site for NADP(+). One can recognise a KARI C-terminal knotted domain in the interval 183-328; it reads TFKEETETDL…EKLRAMMPWI (146 aa). Mg(2+) contacts are provided by aspartate 191, glutamate 195, glutamate 227, and glutamate 231. Serine 252 is a substrate binding site.

This sequence belongs to the ketol-acid reductoisomerase family. Mg(2+) serves as cofactor.

The catalysed reaction is (2R)-2,3-dihydroxy-3-methylbutanoate + NADP(+) = (2S)-2-acetolactate + NADPH + H(+). It catalyses the reaction (2R,3R)-2,3-dihydroxy-3-methylpentanoate + NADP(+) = (S)-2-ethyl-2-hydroxy-3-oxobutanoate + NADPH + H(+). It participates in amino-acid biosynthesis; L-isoleucine biosynthesis; L-isoleucine from 2-oxobutanoate: step 2/4. It functions in the pathway amino-acid biosynthesis; L-valine biosynthesis; L-valine from pyruvate: step 2/4. Functionally, involved in the biosynthesis of branched-chain amino acids (BCAA). Catalyzes an alkyl-migration followed by a ketol-acid reduction of (S)-2-acetolactate (S2AL) to yield (R)-2,3-dihydroxy-isovalerate. In the isomerase reaction, S2AL is rearranged via a Mg-dependent methyl migration to produce 3-hydroxy-3-methyl-2-ketobutyrate (HMKB). In the reductase reaction, this 2-ketoacid undergoes a metal-dependent reduction by NADPH to yield (R)-2,3-dihydroxy-isovalerate. The chain is Ketol-acid reductoisomerase (NADP(+)) from Petrotoga mobilis (strain DSM 10674 / SJ95).